A 267-amino-acid chain; its full sequence is 2-keto-3-deoxy-L-rhamnonate aldolase (267 aa).

Residue histidine 49 is the Proton acceptor of the active site. Glutamine 151 lines the substrate pocket. Residue glutamate 153 coordinates Mg(2+). Positions 178 and 179 each coordinate substrate. Mg(2+) is bound at residue aspartate 179.

The protein belongs to the HpcH/HpaI aldolase family. KDR aldolase subfamily. In terms of assembly, homohexamer. Mg(2+) is required as a cofactor.

The enzyme catalyses 2-dehydro-3-deoxy-L-rhamnonate = (S)-lactaldehyde + pyruvate. Catalyzes the reversible retro-aldol cleavage of 2-keto-3-deoxy-L-rhamnonate (KDR) to pyruvate and lactaldehyde. The protein is 2-keto-3-deoxy-L-rhamnonate aldolase of Salmonella gallinarum (strain 287/91 / NCTC 13346).